The sequence spans 142 residues: Large ribosomal subunit protein uL11 (142 aa).

Belongs to the universal ribosomal protein uL11 family. Part of the ribosomal stalk of the 50S ribosomal subunit. Interacts with L10 and the large rRNA to form the base of the stalk. L10 forms an elongated spine to which L12 dimers bind in a sequential fashion forming a multimeric L10(L12)X complex. In terms of processing, one or more lysine residues are methylated.

Forms part of the ribosomal stalk which helps the ribosome interact with GTP-bound translation factors. This is Large ribosomal subunit protein uL11 from Mycolicibacterium gilvum (strain PYR-GCK) (Mycobacterium gilvum (strain PYR-GCK)).